The sequence spans 163 residues: Phosphopantetheine adenylyltransferase (163 aa).

Ser10 serves as a coordination point for substrate. ATP-binding positions include 10 to 11 (SF) and His18. Residues Lys42, Leu74, and Arg88 each contribute to the substrate site. Residues 89–91 (GLR), Glu99, and 124–130 (YSFLSSS) contribute to the ATP site.

Belongs to the bacterial CoaD family. As to quaternary structure, homohexamer. Requires Mg(2+) as cofactor.

It localises to the cytoplasm. It carries out the reaction (R)-4'-phosphopantetheine + ATP + H(+) = 3'-dephospho-CoA + diphosphate. The protein operates within cofactor biosynthesis; coenzyme A biosynthesis; CoA from (R)-pantothenate: step 4/5. In terms of biological role, reversibly transfers an adenylyl group from ATP to 4'-phosphopantetheine, yielding dephospho-CoA (dPCoA) and pyrophosphate. This Bacillus cereus (strain G9842) protein is Phosphopantetheine adenylyltransferase.